The primary structure comprises 253 residues: DNA polymerase sliding clamp (253 aa).

It belongs to the PCNA family. Homotrimer. The subunits circularize to form a toroid; DNA passes through its center. Replication factor C (RFC) is required to load the toroid on the DNA.

In terms of biological role, sliding clamp subunit that acts as a moving platform for DNA processing. Responsible for tethering the catalytic subunit of DNA polymerase and other proteins to DNA during high-speed replication. This is DNA polymerase sliding clamp from Methanopyrus kandleri (strain AV19 / DSM 6324 / JCM 9639 / NBRC 100938).